Consider the following 298-residue polypeptide: Bifunctional protein FolD (298 aa).

NADP(+) is bound by residues 166–168 (GRS), Ser191, and Ile232.

This sequence belongs to the tetrahydrofolate dehydrogenase/cyclohydrolase family. In terms of assembly, homodimer.

It carries out the reaction (6R)-5,10-methylene-5,6,7,8-tetrahydrofolate + NADP(+) = (6R)-5,10-methenyltetrahydrofolate + NADPH. The catalysed reaction is (6R)-5,10-methenyltetrahydrofolate + H2O = (6R)-10-formyltetrahydrofolate + H(+). Its pathway is one-carbon metabolism; tetrahydrofolate interconversion. Its function is as follows. Catalyzes the oxidation of 5,10-methylenetetrahydrofolate to 5,10-methenyltetrahydrofolate and then the hydrolysis of 5,10-methenyltetrahydrofolate to 10-formyltetrahydrofolate. The protein is Bifunctional protein FolD of Maricaulis maris (strain MCS10) (Caulobacter maris).